A 179-amino-acid polypeptide reads, in one-letter code: Large ribosomal subunit protein uL5 (179 aa).

The protein belongs to the universal ribosomal protein uL5 family. In terms of assembly, part of the 50S ribosomal subunit; part of the 5S rRNA/L5/L18/L25 subcomplex. Contacts the 5S rRNA and the P site tRNA. Forms a bridge to the 30S subunit in the 70S ribosome.

Functionally, this is one of the proteins that bind and probably mediate the attachment of the 5S RNA into the large ribosomal subunit, where it forms part of the central protuberance. In the 70S ribosome it contacts protein S13 of the 30S subunit (bridge B1b), connecting the 2 subunits; this bridge is implicated in subunit movement. Contacts the P site tRNA; the 5S rRNA and some of its associated proteins might help stabilize positioning of ribosome-bound tRNAs. The sequence is that of Large ribosomal subunit protein uL5 from Albidiferax ferrireducens (strain ATCC BAA-621 / DSM 15236 / T118) (Rhodoferax ferrireducens).